The following is a 284-amino-acid chain: Nucleotide-binding protein VSAL_I0495 (284 aa).

8-15 (GNSGAGKS) contacts ATP. 56-59 (DIRN) is a binding site for GTP.

This sequence belongs to the RapZ-like family.

Its function is as follows. Displays ATPase and GTPase activities. The protein is Nucleotide-binding protein VSAL_I0495 of Aliivibrio salmonicida (strain LFI1238) (Vibrio salmonicida (strain LFI1238)).